A 171-amino-acid polypeptide reads, in one-letter code: Shikimate kinase (171 aa).

An ATP-binding site is contributed by 11–16 (ATGKTT). Position 15 (threonine 15) interacts with Mg(2+). The substrate site is built by aspartate 33, arginine 57, and glycine 79. Arginine 117 provides a ligand contact to ATP. Arginine 136 provides a ligand contact to substrate.

The protein belongs to the shikimate kinase family. Monomer. Requires Mg(2+) as cofactor.

The protein localises to the cytoplasm. The catalysed reaction is shikimate + ATP = 3-phosphoshikimate + ADP + H(+). It functions in the pathway metabolic intermediate biosynthesis; chorismate biosynthesis; chorismate from D-erythrose 4-phosphate and phosphoenolpyruvate: step 5/7. Functionally, catalyzes the specific phosphorylation of the 3-hydroxyl group of shikimic acid using ATP as a cosubstrate. The sequence is that of Shikimate kinase from Thermoanaerobacter pseudethanolicus (strain ATCC 33223 / 39E) (Clostridium thermohydrosulfuricum).